Reading from the N-terminus, the 171-residue chain is Lipoprotein signal peptidase (171 aa).

Transmembrane regions (helical) follow at residues 12–32 (WYWVAVLVFFADQLSKQWVLA), 67–87 (WQRWLFTIVAVGFSTLLTVWL), and 93–113 (SLLKLNLAYTLVIGGALGNLV). Residues Asp123 and Asp141 contribute to the active site. A helical membrane pass occupies residues 137–157 (FNIADSAICIGAVLIIWDAFL).

Belongs to the peptidase A8 family.

The protein localises to the cell inner membrane. The enzyme catalyses Release of signal peptides from bacterial membrane prolipoproteins. Hydrolyzes -Xaa-Yaa-Zaa-|-(S,diacylglyceryl)Cys-, in which Xaa is hydrophobic (preferably Leu), and Yaa (Ala or Ser) and Zaa (Gly or Ala) have small, neutral side chains.. It functions in the pathway protein modification; lipoprotein biosynthesis (signal peptide cleavage). Functionally, this protein specifically catalyzes the removal of signal peptides from prolipoproteins. This Shewanella baltica (strain OS195) protein is Lipoprotein signal peptidase.